Here is a 336-residue protein sequence, read N- to C-terminus: tRNA N6-adenosine threonylcarbamoyltransferase (336 aa).

Residues histidine 114 and histidine 118 each coordinate Fe cation. Substrate-binding positions include 136–140, aspartate 169, glycine 182, aspartate 186, and asparagine 275; that span reads LVSGG. Aspartate 301 provides a ligand contact to Fe cation.

Belongs to the KAE1 / TsaD family. Fe(2+) is required as a cofactor.

It localises to the cytoplasm. The catalysed reaction is L-threonylcarbamoyladenylate + adenosine(37) in tRNA = N(6)-L-threonylcarbamoyladenosine(37) in tRNA + AMP + H(+). Required for the formation of a threonylcarbamoyl group on adenosine at position 37 (t(6)A37) in tRNAs that read codons beginning with adenine. Is involved in the transfer of the threonylcarbamoyl moiety of threonylcarbamoyl-AMP (TC-AMP) to the N6 group of A37, together with TsaE and TsaB. TsaD likely plays a direct catalytic role in this reaction. In Streptococcus pneumoniae (strain Hungary19A-6), this protein is tRNA N6-adenosine threonylcarbamoyltransferase.